Consider the following 566-residue polypeptide: MTSTAYSRPSKLPGGGNGSDRRLPPRLMRGLTTKIEPKKLGVGLLAGCCLALLTYVSLAKLFAIYSPVFASTANTSALMQNSPPSSPETGPIPPQETAAGAGNNDSTVDPVDLPEDKSLVEAQPQEPGFPSAESQEPGLPAALSRKEDDAERAAAAAASEIKQSEKKNGVAAGGDTKIKCDENGVDEGFPYARPSVCELYGDVRVSPKQKTIYVVNPSGAGGFDENGEKRLRPYARKDDFLLPGVVEVTIKSVPSEAAAPKCTKQHAVPAVVFSVAGYTDNFFHDMTDAMIPLFLTTAHLKGEVQILITNYKPWWVQKYTPLLRKLSNYDVINFDEDAGVHCFPQGYLGLYRDRDLIISPHPTRNPRNYTMVDYNRFLRDALELRRDRPSVLGEEPGMRPRMLIISRAGTRKLLNLEEVAAAATELGFNVTVAEAGADVPAFAALVNSADVLLAVHGAGLTNQIFLPAEAVVVQIVPWGNMDWMATNFYGQPARDMQLRYVEYYVGEEETSLKHNYSRDHMVFKDPKALHAQGWQTLAATIMKQDVEVNLTRFRPILLQALDRLQQ.

A disordered region spans residues 1–25 (MTSTAYSRPSKLPGGGNGSDRRLPP). Residues 1 to 43 (MTSTAYSRPSKLPGGGNGSDRRLPPRLMRGLTTKIEPKKLGVG) are Cytoplasmic-facing. Residues 44–64 (LLAGCCLALLTYVSLAKLFAI) traverse the membrane as a helical; Signal-anchor for type II membrane protein segment. Residues 65–566 (YSPVFASTAN…LLQALDRLQQ (502 aa)) are Lumenal-facing. An N-linked (GlcNAc...) asparagine glycan is attached at N74. The tract at residues 78–180 (LMQNSPPSSP…AAGGDTKIKC (103 aa)) is disordered. Positions 84-94 (PSSPETGPIPP) are enriched in pro residues. Residues N104, N368, N429, N515, and N549 are each glycosylated (N-linked (GlcNAc...) asparagine).

The protein belongs to the glycosyltransferase 61 family. Highly expressed in young panicles.

It is found in the golgi apparatus membrane. Its pathway is glycan metabolism. Functionally, glycosyltransferase involved in the xylosylation of xylan, the major hemicellulose (non-cellulosic component) of primary and secondary walls of angiosperms. Possesses beta-1,2-xylosyltransferase activity, transferring xylose from UDP-xylose to the xylan backbone. The chain is Beta-1,2-xylosyltransferease XAX1 from Oryza sativa subsp. japonica (Rice).